The sequence spans 29 residues: Dander allergen Equ c 2.0101 (29 aa).

Belongs to the calycin superfamily. Lipocalin family.

Its subcellular location is the secreted. The protein is Dander allergen Equ c 2.0101 of Equus caballus (Horse).